We begin with the raw amino-acid sequence, 279 residues long: Large ribosomal subunit protein uL2 (279 aa).

A disordered region spans residues 222–279 (GMAMNPVDHPMGGGEGKSKSGGGRRHPKSPWGQLAKGLKTRNKKKASQKLIVRGRNAK). Residues 232 to 242 (MGGGEGKSKSG) show a composition bias toward gly residues. The span at 259-268 (LKTRNKKKAS) shows a compositional bias: basic residues.

It belongs to the universal ribosomal protein uL2 family. In terms of assembly, part of the 50S ribosomal subunit. Forms a bridge to the 30S subunit in the 70S ribosome.

In terms of biological role, one of the primary rRNA binding proteins. Required for association of the 30S and 50S subunits to form the 70S ribosome, for tRNA binding and peptide bond formation. It has been suggested to have peptidyltransferase activity; this is somewhat controversial. Makes several contacts with the 16S rRNA in the 70S ribosome. The protein is Large ribosomal subunit protein uL2 of Chlorobium phaeobacteroides (strain DSM 266 / SMG 266 / 2430).